A 500-amino-acid polypeptide reads, in one-letter code: Probable cytosol aminopeptidase (500 aa).

Mn(2+) contacts are provided by K264 and D269. The active site involves K276. Residues D287, D346, and E348 each contribute to the Mn(2+) site. Residue R350 is part of the active site.

Belongs to the peptidase M17 family. The cofactor is Mn(2+).

It is found in the cytoplasm. It carries out the reaction Release of an N-terminal amino acid, Xaa-|-Yaa-, in which Xaa is preferably Leu, but may be other amino acids including Pro although not Arg or Lys, and Yaa may be Pro. Amino acid amides and methyl esters are also readily hydrolyzed, but rates on arylamides are exceedingly low.. The enzyme catalyses Release of an N-terminal amino acid, preferentially leucine, but not glutamic or aspartic acids.. Presumably involved in the processing and regular turnover of intracellular proteins. Catalyzes the removal of unsubstituted N-terminal amino acids from various peptides. This is Probable cytosol aminopeptidase from Afipia carboxidovorans (strain ATCC 49405 / DSM 1227 / KCTC 32145 / OM5) (Oligotropha carboxidovorans).